The chain runs to 118 residues: Acidic phospholipase A2 homolog (118 aa).

7 cysteine pairs are disulfide-bonded: C11/C70, C25/C117, C27/C43, C42/C98, C49/C91, C59/C84, and C77/C89.

The protein belongs to the phospholipase A2 family. Group I subfamily. A49 sub-subfamily. In terms of tissue distribution, expressed by the venom gland.

It is found in the secreted. Snake venom phospholipase A2 (PLA2) homolog that lacks both catalytic and neurotoxicity activities. The chain is Acidic phospholipase A2 homolog from Bungarus fasciatus (Banded krait).